A 78-amino-acid chain; its full sequence is Large ribosomal subunit protein bL28 (78 aa).

The segment at 1-25 (MSRVCQVTGKRPTVGNNRSHARNAT) is disordered.

This sequence belongs to the bacterial ribosomal protein bL28 family.

The chain is Large ribosomal subunit protein bL28 from Alteromonas mediterranea (strain DSM 17117 / CIP 110805 / LMG 28347 / Deep ecotype).